A 426-amino-acid polypeptide reads, in one-letter code: MESLTLQPIELISGEVNLPGSKSVSNRALLLAALASGTTRLTNLLDSDDIRHMLNALTKLGVNYRLSADKTTCEVEGLGQAFHTTQPLELFLGNAGTAMRPLAAALCLGQGDYVLTGEPRMKERPIGHLVDALRQAGAQIEYLEQENFPPLRIQGTGLQAGTVTIDGSISSQFLTAFLMSAPLAQGKVTIKIVGELVSKPYIDITLHIMEQFGVQVINHDYQEFVIPAGQSYVSPGQFLVEGDASSASYFLAAAAIKGGEVKVTGIGKNSIQGDIQFADALEKMGAQIEWGDDYVIARRGELNAVDLDFNHIPDAAMTIATTALFAKGTTAIRNVYNWRVKETDRLAAMATELRKVGATVEEGEDFIVITPPTKLIHAAIDTYDDHRMAMCFSLVALSDTPVTINDPKCTSKTFPDYFDKFAQLSR.

Lys-22, Ser-23, and Arg-27 together coordinate 3-phosphoshikimate. Lys-22 contacts phosphoenolpyruvate. Phosphoenolpyruvate is bound by residues Gly-96 and Arg-124. Positions 170 and 171 each coordinate 3-phosphoshikimate. Residue Gln-172 coordinates phosphoenolpyruvate. 3-phosphoshikimate contacts are provided by Ser-198, Asp-314, Asn-337, and Lys-341. The active-site Proton acceptor is the Asp-314. Phosphoenolpyruvate is bound by residues Arg-345, Arg-387, and Lys-412.

It belongs to the EPSP synthase family. As to quaternary structure, homotetramer.

It is found in the cytoplasm. It carries out the reaction 3-phosphoshikimate + phosphoenolpyruvate = 5-O-(1-carboxyvinyl)-3-phosphoshikimate + phosphate. It functions in the pathway metabolic intermediate biosynthesis; chorismate biosynthesis; chorismate from D-erythrose 4-phosphate and phosphoenolpyruvate: step 6/7. Functionally, catalyzes the transfer of the enolpyruvyl moiety of phosphoenolpyruvate (PEP) to the 5-hydroxyl of shikimate-3-phosphate (S3P) to produce enolpyruvyl shikimate-3-phosphate and inorganic phosphate. The protein is 3-phosphoshikimate 1-carboxyvinyltransferase of Vibrio cholerae serotype O1 (strain ATCC 39315 / El Tor Inaba N16961).